We begin with the raw amino-acid sequence, 305 residues long: Phosphatidylinositol:ceramide inositolphosphotransferase 2 (305 aa).

6 consecutive transmembrane segments (helical) span residues 34-54 (LLAG…VHYI), 81-101 (ETVF…PFIL), 105-125 (KIYT…CQFL), 168-188 (VMYG…LVFV), 198-218 (RFIK…IIAS), and 221-241 (HYSV…FCLD). The active site involves His180. Residues His221 and Asp225 contribute to the active site.

The protein belongs to the sphingomyelin synthase family. In terms of tissue distribution, expressed in leaves, roots, stems, flowers and siliques.

It is found in the golgi apparatus. It localises to the trans-Golgi network membrane. It catalyses the reaction an N-(2R-hydroxy-very-long-chain fatty acyl)-(R)-4-hydroxysphingoid base + a 1,2-diacyl-sn-glycero-3-phospho-(1D-myo-inositol) = a 1D-myo-inositol-1-phospho-N-[(R)-2-hydroxy-very-long-chain fatty acyl]-(R)-4-hydroxysphingoid base + a 1,2-diacyl-sn-glycerol. The protein operates within sphingolipid metabolism. Functionally, catalyzes the transfer of the phosphorylinositol group from phosphatidylinositol (PI) to phytoceramide, an essential step in sphingolipid biosynthesis. May play an important role in modulating plant programmed cell death (PCD) associated with defense (e.g. toward Golovinomyces cichoracearum) by promoting sphingolipid metabolism and thus regulating ceramide accumulation. The sequence is that of Phosphatidylinositol:ceramide inositolphosphotransferase 2 from Arabidopsis thaliana (Mouse-ear cress).